We begin with the raw amino-acid sequence, 481 residues long: MDNSSSRRRFLQTLGLATGALAAGSFANAQEVAPLAPKKITIPDPNNIGPMTTWPPRKPGAIYMGGFRAPKLDKVRVAFVGVGERGSMHVGQMAVIEGAEIVGICDLYEDWAKRSADVVEKKTGKRPPIFTKGPEDYKRMMKEVKPDAVIVCPSWEWHCRVTCDVMKMGAHAFVEVPMAVSIKELWEIVDTSEETRKHCMMMENVNYGREELMYLNMVRQGVIGDLLYGEAAYIHELRGQMKQVERGTGSWRTYHYAKRNGNVYPTHGLGPIAQYMNLARKDDCFGRLVSFSSPALGRAAYAKKNFPADHKWNKLDFACGDMNTSIIKTTMGRTVLVEWDETSPRPYSRLNLIQGTLGTLAGFPTRVAGEKLGNGNYHEWIEGKEKLAPIFEKYDHPLWKRIGPLALKMGGHGGMDFVMLFRIIECLRNGEPMDQNVYEGAFWSSVSELSEYSVAQGGMPQVFPDFTRGDWKTTAPLGIVQ.

A signal peptide (tat-type signal) is located at residues 1 to 29 (MDNSSSRRRFLQTLGLATGALAAGSFANA). NAD(+) is bound by residues 84–85 (ER), Asp106, 155–158 (WEWH), 175–176 (EV), and Asn204. Substrate contacts are provided by residues Tyr233, Arg252, 264–267 (YPTH), and Tyr347. Tyr264 contributes to the NAD(+) binding site.

Belongs to the Gfo/Idh/MocA family. Glycosyl hydrolase 109 subfamily. The cofactor is NAD(+). Post-translationally, predicted to be exported by the Tat system. The position of the signal peptide cleavage has not been experimentally proven.

In terms of biological role, glycosidase. The sequence is that of Glycosyl hydrolase family 109 protein 1 from Akkermansia muciniphila (strain ATCC BAA-835 / DSM 22959 / JCM 33894 / BCRC 81048 / CCUG 64013 / CIP 107961 / Muc).